Here is a 218-residue protein sequence, read N- to C-terminus: Small ribosomal subunit protein uS3c (218 aa).

The 76-residue stretch at 43–118 (IKDYVKKNKK…RLNIAITRIE (76 aa)) folds into the KH type-2 domain.

This sequence belongs to the universal ribosomal protein uS3 family. In terms of assembly, part of the 30S ribosomal subunit.

Its subcellular location is the plastid. The protein resides in the chloroplast. The protein is Small ribosomal subunit protein uS3c (rps3) of Phalaenopsis aphrodite subsp. formosana (Moth orchid).